We begin with the raw amino-acid sequence, 483 residues long: MEHYSLAQLSKALHNREFSSVELTQHCINKIQSNKDLNAFISLDEDQALKEAQSADLVLKSGEGKPLTGIPMALKDLFCTKRLNTTCASKMLANFQAPYDATIVTKFKQNGAIIIGKTNMDEFAMGSSNENSYFGSVKNPWDRERVSGGSSGGSAAAVAGNLVPFAIGSDTGGSIRQPAAFCGISGIKPTYGLVSRYGMVAFASSLDQAGPFAKSAEDLAMILHCMAGFDSKDSTSVDRVIPDYSAEIKNPVDKIRIGLPSCFFQPQVEKGIQDAIHDAVKLFENLGAEIIEIDLKLQPLWVPCYYVIACAEASSNLSRYDGIRFGHRSKSASTLIELITNSRSEGFGNEVKRRILTGTHVLSSGFFDAYYLHAQKVRRLIRDELITTLNSVDVILGPTTPTTAFKLGEKIDDPIQNYLADVFTVAANLAGLPAVSIPTGFENKLPIGLQLMSKHFSENRLLAIAHHYQQHTNWHLANPNKQR.

Catalysis depends on charge relay system residues Lys-75 and Ser-150. Ser-174 serves as the catalytic Acyl-ester intermediate.

It belongs to the amidase family. GatA subfamily. In terms of assembly, heterotrimer of A, B and C subunits.

It catalyses the reaction L-glutamyl-tRNA(Gln) + L-glutamine + ATP + H2O = L-glutaminyl-tRNA(Gln) + L-glutamate + ADP + phosphate + H(+). Allows the formation of correctly charged Gln-tRNA(Gln) through the transamidation of misacylated Glu-tRNA(Gln) in organisms which lack glutaminyl-tRNA synthetase. The reaction takes place in the presence of glutamine and ATP through an activated gamma-phospho-Glu-tRNA(Gln). This chain is Glutamyl-tRNA(Gln) amidotransferase subunit A, found in Legionella pneumophila subsp. pneumophila (strain Philadelphia 1 / ATCC 33152 / DSM 7513).